The sequence spans 572 residues: Protein 5NUC (572 aa).

The signal sequence occupies residues 1–25 (MLFFLNFFVLVFSIELALLTASAAA). Positions 39 and 41 each coordinate Zn(2+). C54 and C64 are joined by a disulfide. Residue N82 is glycosylated (N-linked (GlcNAc...) asparagine). Zn(2+)-binding residues include D93, N125, H227, and H250. Cysteines 360 and 365 form a disulfide. The substrate site is built by R361, Q399, R404, and F427. N-linked (GlcNAc...) asparagine glycosylation is found at N454 and N490. The cysteines at positions 488 and 491 are disulfide-linked. 512-518 (FMKDGGD) serves as a coordination point for substrate.

The protein belongs to the 5'-nucleotidase family. Zn(2+) is required as a cofactor.

The catalysed reaction is UDP-sugar + H2O = UMP + alpha-D-aldose 1-phosphate.. The enzyme catalyses a ribonucleoside 5'-phosphate + H2O = a ribonucleoside + phosphate. Degradation of external UDP-glucose to uridine monophosphate and glucose-1-phosphate, which can then be used by the cell. This Lutzomyia longipalpis (Sand fly) protein is Protein 5NUC (5NUC).